A 300-amino-acid polypeptide reads, in one-letter code: tRNA pseudouridine synthase B (300 aa).

D41 functions as the Nucleophile in the catalytic mechanism.

This sequence belongs to the pseudouridine synthase TruB family. Type 1 subfamily.

It carries out the reaction uridine(55) in tRNA = pseudouridine(55) in tRNA. Functionally, responsible for synthesis of pseudouridine from uracil-55 in the psi GC loop of transfer RNAs. The protein is tRNA pseudouridine synthase B of Synechococcus sp. (strain WH7803).